The primary structure comprises 95 residues: Sec-independent protein translocase protein TatA (95 aa).

Residues 1 to 21 (MGGISIWQLLIIALIVVLLFG) traverse the membrane as a helical segment. Positions 50 to 61 (KALEDNAADKPA) are enriched in basic and acidic residues. The segment at 50 to 95 (KALEDNAADKPAADAAKVTETAKVAETAPVAETAEKKAESKGKEQA) is disordered. The span at 62-81 (ADAAKVTETAKVAETAPVAE) shows a compositional bias: low complexity. Residues 82 to 95 (TAEKKAESKGKEQA) show a composition bias toward basic and acidic residues.

It belongs to the TatA/E family. In terms of assembly, the Tat system comprises two distinct complexes: a TatABC complex, containing multiple copies of TatA, TatB and TatC subunits, and a separate TatA complex, containing only TatA subunits. Substrates initially bind to the TatABC complex, which probably triggers association of the separate TatA complex to form the active translocon.

It is found in the cell inner membrane. In terms of biological role, part of the twin-arginine translocation (Tat) system that transports large folded proteins containing a characteristic twin-arginine motif in their signal peptide across membranes. TatA could form the protein-conducting channel of the Tat system. This Shewanella halifaxensis (strain HAW-EB4) protein is Sec-independent protein translocase protein TatA.